We begin with the raw amino-acid sequence, 633 residues long: Probable potassium transport system protein Kup (633 aa).

12 consecutive transmembrane segments (helical) span residues 19 to 39 (LGML…SPLY), 61 to 81 (ILAL…VLFI), 112 to 132 (VLVI…MITP), 148 to 168 (SGLE…LFLI), 179 to 199 (LFGP…INGI), 217 to 237 (FFIV…LALT), 258 to 278 (WFAL…ALLL), 290 to 310 (LLAP…ATVI), 348 to 368 (IYIG…VLGF), 380 to 400 (VAVT…MLLL), 405 to 425 (PVLA…FFAA), and 430 to 450 (IFQG…LMTT).

Belongs to the HAK/KUP transporter (TC 2.A.72) family.

It localises to the cell inner membrane. It carries out the reaction K(+)(in) + H(+)(in) = K(+)(out) + H(+)(out). In terms of biological role, transport of potassium into the cell. Likely operates as a K(+):H(+) symporter. The chain is Probable potassium transport system protein Kup from Pseudomonas fluorescens (strain ATCC BAA-477 / NRRL B-23932 / Pf-5).